We begin with the raw amino-acid sequence, 398 residues long: Succinate--CoA ligase [ADP-forming] subunit beta (398 aa).

The ATP-grasp domain occupies 9–254 (KALLHEFGVP…ETEEDAKEIE (246 aa)). Residues K46, 53–55 (GRG), E109, S112, and E117 contribute to the ATP site. Positions 209 and 223 each coordinate Mg(2+). Substrate is bound by residues N274 and 331-333 (GIM).

This sequence belongs to the succinate/malate CoA ligase beta subunit family. In terms of assembly, heterotetramer of two alpha and two beta subunits. The cofactor is Mg(2+).

It carries out the reaction succinate + ATP + CoA = succinyl-CoA + ADP + phosphate. It catalyses the reaction GTP + succinate + CoA = succinyl-CoA + GDP + phosphate. It participates in carbohydrate metabolism; tricarboxylic acid cycle; succinate from succinyl-CoA (ligase route): step 1/1. Its function is as follows. Succinyl-CoA synthetase functions in the citric acid cycle (TCA), coupling the hydrolysis of succinyl-CoA to the synthesis of either ATP or GTP and thus represents the only step of substrate-level phosphorylation in the TCA. The beta subunit provides nucleotide specificity of the enzyme and binds the substrate succinate, while the binding sites for coenzyme A and phosphate are found in the alpha subunit. In Bradyrhizobium sp. (strain BTAi1 / ATCC BAA-1182), this protein is Succinate--CoA ligase [ADP-forming] subunit beta.